The primary structure comprises 147 residues: Myoglobin (147 aa).

In terms of domain architecture, Globin spans 2-141; the sequence is ADFDAVLKFW…VIADLEANYK (140 aa). His-60 is a nitrite binding site. His-60 is an O2 binding site. His-89 lines the heme b pocket.

It belongs to the globin family. Monomeric.

It localises to the cytoplasm. Its subcellular location is the sarcoplasm. It carries out the reaction Fe(III)-heme b-[protein] + nitric oxide + H2O = Fe(II)-heme b-[protein] + nitrite + 2 H(+). The catalysed reaction is H2O2 + AH2 = A + 2 H2O. In terms of biological role, monomeric heme protein which primary function is to store oxygen and facilitate its diffusion within muscle tissues. Reversibly binds oxygen through a pentacoordinated heme iron and enables its timely and efficient release as needed during periods of heightened demand. Depending on the oxidative conditions of tissues and cells, and in addition to its ability to bind oxygen, it also has a nitrite reductase activity whereby it regulates the production of bioactive nitric oxide. Under stress conditions, like hypoxia and anoxia, it also protects cells against reactive oxygen species thanks to its pseudoperoxidase activity. The chain is Myoglobin (mb) from Sarda chiliensis (Pacific bonito).